Consider the following 348-residue polypeptide: Phosphatidylglycerophosphate phosphatase 1, chloroplastic/mitochondrial (348 aa).

A chloroplast and mitochondrion-targeting transit peptide spans 1–58; the sequence is MQTPSMAASTTSYYPIPKSFLLSPPRHKRNPNLISCSTKPICSPPPPSSSSSSPLQTT. The disordered stretch occupies residues 17-67; it reads PKSFLLSPPRHKRNPNLISCSTKPICSPPPPSSSSSSPLQTTTTHRSQKQN. The span at 55–67 shows a compositional bias: polar residues; it reads LQTTTTHRSQKQN. The Phosphoryl acceptor motif lies at 184-188; that stretch reads DKDNT.

This sequence belongs to the HAD-like hydrolase superfamily. It depends on Mg(2+) as a cofactor. As to expression, mainly expressed in inflorescences (especially in pollen) and, to a lower extent, in leaves, stems and siliques, as well as, at low levels, in roots. Mostly expressed in hypocotyl, vasculatures, trichomes, guard cells and stigmas.

The protein localises to the plastid. The protein resides in the chloroplast. It localises to the mitochondrion. It catalyses the reaction a 1,2-diacyl-sn-glycero-3-phospho-(1'-sn-glycero-3'-phosphate) + H2O = a 1,2-diacyl-sn-glycero-3-phospho-(1'-sn-glycerol) + phosphate. Its pathway is phospholipid metabolism; phosphatidylglycerol biosynthesis; phosphatidylglycerol from CDP-diacylglycerol: step 2/2. Functionally, phosphatidylglycerophosphate (PGP) phosphatase involved in the biosynthesis of phosphatidylglycerol (PG), a phosphoglycerolipid predominantly present in chloroplastic thylakoid membranes and which has important photosynthetic function; seems to use PGP 34:3, PGP 34:2 and PGP 34:1 as substrates. Required for thylakoid membranes development and chloroplast function. Necessary for normal cell growth. Required for root growth and columella cells organization. In Arabidopsis thaliana (Mouse-ear cress), this protein is Phosphatidylglycerophosphate phosphatase 1, chloroplastic/mitochondrial.